A 311-amino-acid polypeptide reads, in one-letter code: HPr kinase/phosphorylase (311 aa).

Catalysis depends on residues H139 and K160. 154–161 (GKSGIGKS) contacts ATP. Mg(2+) is bound at residue S161. The active-site Proton acceptor; for phosphorylation activity. Proton donor; for dephosphorylation activity is the D178. Positions 201–210 (MEIRGLGIIN) are important for the catalytic mechanism of both phosphorylation and dephosphorylation. A Mg(2+)-binding site is contributed by E202. Residue R245 is part of the active site. The segment at 266–271 (PISSGR) is important for the catalytic mechanism of dephosphorylation.

It belongs to the HPrK/P family. In terms of assembly, homohexamer. It depends on Mg(2+) as a cofactor.

The enzyme catalyses [HPr protein]-L-serine + ATP = [HPr protein]-O-phospho-L-serine + ADP + H(+). It carries out the reaction [HPr protein]-O-phospho-L-serine + phosphate + H(+) = [HPr protein]-L-serine + diphosphate. Catalyzes the ATP- as well as the pyrophosphate-dependent phosphorylation of a specific serine residue in HPr, a phosphocarrier protein of the phosphoenolpyruvate-dependent sugar phosphotransferase system (PTS). HprK/P also catalyzes the pyrophosphate-producing, inorganic phosphate-dependent dephosphorylation (phosphorolysis) of seryl-phosphorylated HPr (P-Ser-HPr). The sequence is that of HPr kinase/phosphorylase (hprK) from Mycoplasma genitalium (strain ATCC 33530 / DSM 19775 / NCTC 10195 / G37) (Mycoplasmoides genitalium).